The following is a 467-amino-acid chain: A-type ATP synthase subunit B (467 aa).

Belongs to the ATPase alpha/beta chains family. In terms of assembly, has multiple subunits with at least A(3), B(3), C, D, E, F, H, I and proteolipid K(x).

The protein localises to the cell membrane. Component of the A-type ATP synthase that produces ATP from ADP in the presence of a proton gradient across the membrane. The B chain is a regulatory subunit. The polypeptide is A-type ATP synthase subunit B (Methanosphaera stadtmanae (strain ATCC 43021 / DSM 3091 / JCM 11832 / MCB-3)).